The sequence spans 389 residues: S-adenosylmethionine synthase (389 aa).

Position 15 (H15) interacts with ATP. Residue D17 participates in Mg(2+) binding. K(+) is bound at residue E43. L-methionine is bound by residues E56 and Q99. The segment at 99 to 109 (QSPDIAQGVNE) is flexible loop. Residues 166–168 (DAK), 234–235 (RF), D243, 249–250 (RK), A266, and K270 contribute to the ATP site. D243 lines the L-methionine pocket. K274 contacts L-methionine.

The protein belongs to the AdoMet synthase family. As to quaternary structure, homotetramer; dimer of dimers. The cofactor is Mg(2+). K(+) serves as cofactor.

It is found in the cytoplasm. It carries out the reaction L-methionine + ATP + H2O = S-adenosyl-L-methionine + phosphate + diphosphate. It participates in amino-acid biosynthesis; S-adenosyl-L-methionine biosynthesis; S-adenosyl-L-methionine from L-methionine: step 1/1. In terms of biological role, catalyzes the formation of S-adenosylmethionine (AdoMet) from methionine and ATP. The overall synthetic reaction is composed of two sequential steps, AdoMet formation and the subsequent tripolyphosphate hydrolysis which occurs prior to release of AdoMet from the enzyme. This Neisseria meningitidis serogroup A / serotype 4A (strain DSM 15465 / Z2491) protein is S-adenosylmethionine synthase.